Here is a 693-residue protein sequence, read N- to C-terminus: MTRTALVTTALPYANGPLHLGHLVGYIQADIWVRARRMSGGKAWFVCADDTHGTPIMLAAEKAGVTPETFIANIQASHERDFAAFGVAFDHYDSTNSAANKALTEQFYLKLEAAGHISRRSVAQFYDPAKGMFLPDRYVKGICPNCGSADQYGDNCEVCGATYAPTDLKEPRSVVSGATPEMRDSEHFFFEVGHFDGFLRDWLAGDVALPGVKAKLGEWLNAEGGLRAWDISRDAPYFGFEIPGQPGKYFYVWLDAPIGYLSSFQTLCSRIGEDFEAHLRAGTSTELHHFLGKDIVNFHGLFWPAVLHGTGHRAPTRLHVNGYLTVDGAKMSKSRGTFVMARTFLDAGLEPEALRYYFAAKSGGGVDDLDLNLGDFIARVNADLVGKFVNLASRCAGFISKRFDGLLAAQLPDAAQYQRFVDGLAPIREAYERNDPAAAIRLTMTLADEANRYIDDVKPWVIAKQEGADAQLQAVCSQGLNLFRVLVTALKPVLPATAAQAEAFLAAPVNDWTELAQPLLGHRITDYTPLFTRIDPKKIDAMIDASKDTLQTTAAAAPTAKNEAAKPAAPAAAKTEANNADAPATIGIDDFAKLDLRIGKVLVCEFVEGSDKLLRFELDAGELGKRQIFSGIRGSYGEPEKLVGRSVVFIANLAPRKMRFGLSEGMILSAGFDGGALALLDADSGAQPGMPVR.

The 'HIGH' region motif lies at 12-22 (PYANGPLHLGH). Zn(2+) is bound by residues Cys-143, Cys-146, Cys-156, and Cys-159. The short motif at 330–334 (KMSKS) is the 'KMSKS' region element. Lys-333 lines the ATP pocket. The disordered stretch occupies residues 557–576 (APTAKNEAAKPAAPAAAKTE). The region spanning 590–693 (DFAKLDLRIG…SGAQPGMPVR (104 aa)) is the tRNA-binding domain.

This sequence belongs to the class-I aminoacyl-tRNA synthetase family. MetG type 1 subfamily. Homodimer. The cofactor is Zn(2+).

It localises to the cytoplasm. It catalyses the reaction tRNA(Met) + L-methionine + ATP = L-methionyl-tRNA(Met) + AMP + diphosphate. Functionally, is required not only for elongation of protein synthesis but also for the initiation of all mRNA translation through initiator tRNA(fMet) aminoacylation. The chain is Methionine--tRNA ligase from Stenotrophomonas maltophilia (strain R551-3).